The following is a 443-amino-acid chain: Thymidine phosphorylase (443 aa).

The protein belongs to the thymidine/pyrimidine-nucleoside phosphorylase family. In terms of assembly, homodimer.

The catalysed reaction is thymidine + phosphate = 2-deoxy-alpha-D-ribose 1-phosphate + thymine. It participates in pyrimidine metabolism; dTMP biosynthesis via salvage pathway; dTMP from thymine: step 1/2. In terms of biological role, the enzymes which catalyze the reversible phosphorolysis of pyrimidine nucleosides are involved in the degradation of these compounds and in their utilization as carbon and energy sources, or in the rescue of pyrimidine bases for nucleotide synthesis. In Shewanella putrefaciens (strain CN-32 / ATCC BAA-453), this protein is Thymidine phosphorylase.